We begin with the raw amino-acid sequence, 286 residues long: MKHFSVKACAKINLGLLITSRRDDGYHTLETIFAPIEWHDTLEFTESDKIGMECTNLDLPVDDTNLCIRAAKALQDYAGISKGVSMKLVKRVPFGAGLGGGSSDAAATLNALCRLWEIDVPSAVLHRLAVKLGADVPYFLEMKGLAYASGIGEELEDLSLALPWHVVTVFPEVQVPTAWAYKNFHRQFERPVPDLKALVRRLCDDRDLSVLDAFENDFGSVVFENYPVVSQVRDTLEASGAQFVSLSGSGSAVYALFENRALADETAEEMAGKFRVNVTPAGFRME.

The active site involves K11. 93-103 (PFGAGLGGGSS) is an ATP binding site. Residue D135 is part of the active site.

The protein belongs to the GHMP kinase family. IspE subfamily.

The enzyme catalyses 4-CDP-2-C-methyl-D-erythritol + ATP = 4-CDP-2-C-methyl-D-erythritol 2-phosphate + ADP + H(+). Its pathway is isoprenoid biosynthesis; isopentenyl diphosphate biosynthesis via DXP pathway; isopentenyl diphosphate from 1-deoxy-D-xylulose 5-phosphate: step 3/6. Its function is as follows. Catalyzes the phosphorylation of the position 2 hydroxy group of 4-diphosphocytidyl-2C-methyl-D-erythritol. The sequence is that of 4-diphosphocytidyl-2-C-methyl-D-erythritol kinase from Chlorobaculum parvum (strain DSM 263 / NCIMB 8327) (Chlorobium vibrioforme subsp. thiosulfatophilum).